A 160-amino-acid chain; its full sequence is MAKVDVVERVTEIIAEVGAPLGIELVDLEYKREGRDMVVRVFLEKREGGINLDDCADVSRQLSDILDVEDFMPERYTLEVSSPGICRPLKKVADYERFLGHLIKVKTFEMLADEAGNKRKTFTGKLTGIADGVIGIDLTEGQKARVPLDKVAKANLEFEF.

It belongs to the RimP family.

It is found in the cytoplasm. Required for maturation of 30S ribosomal subunits. In Citrifermentans bemidjiense (strain ATCC BAA-1014 / DSM 16622 / JCM 12645 / Bem) (Geobacter bemidjiensis), this protein is Ribosome maturation factor RimP.